The sequence spans 424 residues: Glycerol-3-phosphate dehydrogenase [NAD(+)] (424 aa).

Residues 79-84 (GSGNWG), Phe111, and Phe167 each bind NAD(+). Lys190 provides a ligand contact to substrate. Ala223 provides a ligand contact to NAD(+). The active-site Proton acceptor is Lys283. The NAD(+) site is built by Arg348 and Gln377. A substrate-binding site is contributed by 348–349 (RN).

It belongs to the NAD-dependent glycerol-3-phosphate dehydrogenase family.

It carries out the reaction sn-glycerol 3-phosphate + NAD(+) = dihydroxyacetone phosphate + NADH + H(+). This Eremothecium gossypii (strain ATCC 10895 / CBS 109.51 / FGSC 9923 / NRRL Y-1056) (Yeast) protein is Glycerol-3-phosphate dehydrogenase [NAD(+)] (GPD).